The primary structure comprises 319 residues: HTH-type transcriptional regulator YidZ (319 aa).

The HTH lysR-type domain maps to L8–T65. The segment at residues V25–A44 is a DNA-binding region (H-T-H motif).

This sequence belongs to the LysR transcriptional regulatory family.

In terms of biological role, involved in anaerobic NO protection. The sequence is that of HTH-type transcriptional regulator YidZ from Salmonella heidelberg (strain SL476).